We begin with the raw amino-acid sequence, 202 residues long: CASP-like protein 2B1 (202 aa).

At 1 to 29 (MSYLGVGVSPGNVPVYHGTNLKVVDRRVR) the chain is on the cytoplasmic side. Residues 30–50 (LAELVLRCVICGLGILAAVLV) traverse the membrane as a helical segment. Residues 51-72 (GTDTQVKVIFTIQKKAKFTDMK) lie on the Extracellular side of the membrane. A helical membrane pass occupies residues 73–93 (ALVFLVIANGIAAAYSLIQGL). Residues 94–109 (RCVVSMVRGSVLFSKP) are Cytoplasmic-facing. The chain crosses the membrane as a helical span at residues 110–130 (LAWAIFSGDQVIAYLTLAAVA). The Extracellular portion of the chain corresponds to 131 to 164 (AAAQSSVFGEFGQPELQWMKICNMYGKFCNQVGE). The chain crosses the membrane as a helical span at residues 165 to 185 (GIVSAVGVSLSMVILSGISAF). Topologically, residues 186–202 (SLFRLYGGNKGTSGGRW) are cytoplasmic.

This sequence belongs to the Casparian strip membrane proteins (CASP) family. Homodimer and heterodimers.

Its subcellular location is the cell membrane. The polypeptide is CASP-like protein 2B1 (Vitis vinifera (Grape)).